Reading from the N-terminus, the 382-residue chain is Flap endonuclease 1 (382 aa).

Positions 1-104 (MGILGLSKLI…GELAKRAERR (104 aa)) are N-domain. Asp-34 serves as a coordination point for Mg(2+). Positions 47 and 70 each coordinate DNA. Asp-86 is a binding site for Mg(2+). Residues 95–118 (GELAKRAERREDAQKALEKATEAG) are disordered. The segment covering 96 to 115 (ELAKRAERREDAQKALEKAT) has biased composition (basic and acidic residues). The interval 122-253 (DMDKFNRRLV…KRATELMNSY (132 aa)) is I-domain. 4 residues coordinate Mg(2+): Glu-158, Glu-160, Asp-179, and Asp-181. DNA is bound at residue Glu-158. DNA is bound by residues Gly-231 and Asp-233. Residue Asp-233 coordinates Mg(2+). Residues 336–344 (TQGRLDSFF) form an interaction with PCNA region. A disordered region spans residues 353 to 382 (TTPKRKADDKNNVQQKKSKTAGNTKGKRPK). Residues 364 to 375 (NVQQKKSKTAGN) are compositionally biased toward polar residues.

It belongs to the XPG/RAD2 endonuclease family. FEN1 subfamily. In terms of assembly, interacts with PCNA. Three molecules of FEN1 bind to one PCNA trimer with each molecule binding to one PCNA monomer. PCNA stimulates the nuclease activity without altering cleavage specificity. Requires Mg(2+) as cofactor. Phosphorylated. Phosphorylation upon DNA damage induces relocalization to the nuclear plasma.

Its subcellular location is the nucleus. It is found in the nucleolus. The protein localises to the nucleoplasm. It localises to the mitochondrion. Structure-specific nuclease with 5'-flap endonuclease and 5'-3' exonuclease activities involved in DNA replication and repair. During DNA replication, cleaves the 5'-overhanging flap structure that is generated by displacement synthesis when DNA polymerase encounters the 5'-end of a downstream Okazaki fragment. It enters the flap from the 5'-end and then tracks to cleave the flap base, leaving a nick for ligation. Also involved in the long patch base excision repair (LP-BER) pathway, by cleaving within the apurinic/apyrimidinic (AP) site-terminated flap. Acts as a genome stabilization factor that prevents flaps from equilibrating into structures that lead to duplications and deletions. Also possesses 5'-3' exonuclease activity on nicked or gapped double-stranded DNA, and exhibits RNase H activity. Also involved in replication and repair of rDNA and in repairing mitochondrial DNA. The protein is Flap endonuclease 1 of Glossina morsitans morsitans (Savannah tsetse fly).